Reading from the N-terminus, the 132-residue chain is Glycerol-3-phosphate cytidylyltransferase (132 aa).

CTP contacts are provided by residues 9–10 (TY) and 14–17 (HYGH). Lysine 44 serves as a coordination point for substrate. Residue lysine 46 coordinates CTP. Lysine 77 is a binding site for substrate. 113 to 120 (RTEGISTT) is a binding site for CTP.

The protein belongs to the cytidylyltransferase family. In terms of assembly, homotetramer or homodimer.

It is found in the cytoplasm. It catalyses the reaction sn-glycerol 3-phosphate + CTP + H(+) = CDP-glycerol + diphosphate. The protein operates within cell wall biogenesis; poly(ribitol phosphate) teichoic acid biosynthesis. Its function is as follows. Catalyzes the transfer of the cytidylyl group of CTP to sn-glycerol 3-phosphate so the activated glycerol 3-phosphate can be used for teichoic acid synthesis, via incorporation into both the linkage unit by TarB and TarF. This chain is Glycerol-3-phosphate cytidylyltransferase, found in Staphylococcus aureus (strain NCTC 8325 / PS 47).